A 428-amino-acid polypeptide reads, in one-letter code: Enolase (428 aa).

Q163 provides a ligand contact to (2R)-2-phosphoglycerate. Residue E205 is the Proton donor of the active site. Positions 242, 283, and 310 each coordinate Mg(2+). (2R)-2-phosphoglycerate-binding residues include K335, R364, S365, and K386. K335 (proton acceptor) is an active-site residue.

Belongs to the enolase family. Requires Mg(2+) as cofactor.

The protein resides in the cytoplasm. The protein localises to the secreted. It is found in the cell surface. The enzyme catalyses (2R)-2-phosphoglycerate = phosphoenolpyruvate + H2O. It participates in carbohydrate degradation; glycolysis; pyruvate from D-glyceraldehyde 3-phosphate: step 4/5. In terms of biological role, catalyzes the reversible conversion of 2-phosphoglycerate (2-PG) into phosphoenolpyruvate (PEP). It is essential for the degradation of carbohydrates via glycolysis. This is Enolase from Sulfurihydrogenibium sp. (strain YO3AOP1).